The primary structure comprises 247 residues: MIGITQAEGVMTIELQRPERRNALNSQLIEKLREAVQKASSADSEVSTRVIVLTGQGTVFCAGADLSGDAFAADYPDRLIELHRVMDAVPMPVIGAINGPAIGAGLQLAMQCDLRVVAPDAYFQFPTSKYGLALDNWSIRRLSSLVGHGRARAMLLTAEKLTADIALQTGMANRIGALADAQAWAAEVTGLAPLAIQHAKRVLNDDGSIEEAWPEHKKLFDKAWTSQDVIEAQVARVEKRPPKFQGA.

Belongs to the enoyl-CoA hydratase/isomerase family.

The catalysed reaction is a (3S)-3-hydroxyacyl-CoA = a (2E)-enoyl-CoA + H2O. It carries out the reaction a 4-saturated-(3S)-3-hydroxyacyl-CoA = a (3E)-enoyl-CoA + H2O. Functionally, could possibly oxidize fatty acids using specific components. The protein is Probable enoyl-CoA hydratase echA6 (echA6) of Mycobacterium leprae (strain TN).